Here is a 285-residue protein sequence, read N- to C-terminus: Protoheme IX farnesyltransferase (285 aa).

9 helical membrane-spanning segments follow: residues 13-33 (LGKL…AFLA), 40-60 (LLPI…AMII), 89-109 (EAII…FIDN), 110-130 (ILTA…YTIL), 137-157 (LNIV…YTSL), 165-185 (GFLL…SLAL), 194-214 (AHYP…AIAI), 230-252 (INLI…SYRL), and 265-285 (FIFS…VKLI).

This sequence belongs to the UbiA prenyltransferase family. Protoheme IX farnesyltransferase subfamily.

It is found in the cell membrane. The catalysed reaction is heme b + (2E,6E)-farnesyl diphosphate + H2O = Fe(II)-heme o + diphosphate. Its pathway is porphyrin-containing compound metabolism; heme O biosynthesis; heme O from protoheme: step 1/1. In terms of biological role, converts heme B (protoheme IX) to heme O by substitution of the vinyl group on carbon 2 of heme B porphyrin ring with a hydroxyethyl farnesyl side group. In Saccharolobus islandicus (strain Y.N.15.51 / Yellowstone #2) (Sulfolobus islandicus), this protein is Protoheme IX farnesyltransferase.